Reading from the N-terminus, the 397-residue chain is MIIKLLVALIHYLHETMAVQSIITTPLLVILMSLRSYAFTEPSLHRQQPPSKGGVRAAYWPAWSDFSTSSIDTNYFTHIYYAFVQPAPESFNLEITESYKKWAPKYDGIHNIRPRVTTLLSIGGGGNNATLFSEMASSKQNRASFINSTIHVARKHEFNGLDLDWEWPGDEKDMSNLALLLKEWYKALVVEANTSRKSRLLLTSAVYFNSTISLIGNGPRSYPVRAIRKYLDWASPMCFDYNGAWANETGFNAALYDPNSNISTKYGIGSWIGSGVPAEKLVMGLPLYGRAWELKDPNDHGVGAKAVGPAVDTDGSMDYDEILVFNKDTGAKVVYDEVAVSFYSYSGTTWIGYDDGPSITKKVQFARSMGLKGYFFWAIGKDKDWTISKQASNAWGY.

The signal sequence occupies residues 1 to 18 (MIIKLLVALIHYLHETMA). The GH18 domain maps to 54 to 397 (GVRAAYWPAW…SKQASNAWGY (344 aa)). Residues Asn128 and Asn147 are each glycosylated (N-linked (GlcNAc...) asparagine). Glu166 serves as the catalytic Proton donor. N-linked (GlcNAc...) asparagine glycans are attached at residues Asn193, Asn209, Asn247, and Asn261.

It belongs to the glycosyl hydrolase 18 family. Chitinase class V subfamily.

The enzyme catalyses Random endo-hydrolysis of N-acetyl-beta-D-glucosaminide (1-&gt;4)-beta-linkages in chitin and chitodextrins.. It participates in glycan degradation; chitin degradation. Functionally, possesses chitinase activity in vitro toward glycol chitin, carboxymethyl-chitin, colloidal chitin, and the chitin oligosaccharides (N-acetylglucosamine) (GlcNAc)6 and (GlcNAc)5. Hydrolyzes (GlcNAc)6 into (GlcNAc)4 and (GlcNAc)2, or two (GlcNAc)3 molecules. Has the capacity to inhibit hyphal growth of the fungus Trichoderma viride in an agar-plate bioassay. Involved in symbiotic signaling. Required for root hair infection threads (ITs) elongation and nodule development. Possesses Nod factor (NF) hydrolase activity. NFs are lipo-chitooligosaccharide signaling molecules produced by nitrogen-fixing rhizobia to initiate nodulation (symbiosis) on the roots of legumes. Modulates NF levels and signaling to complete transition of infected nodules to functional nitrogen-fixing organs. This Lotus japonicus (Lotus corniculatus var. japonicus) protein is Class V chitinase CHIT5.